Here is an 827-residue protein sequence, read N- to C-terminus: Carnosine synthase 1 (827 aa).

One can recognise an ATP-grasp domain in the interval 516 to 720 (GPPWPSTSLH…LLLASTMVAC (205 aa)). An ATP-binding site is contributed by 542 to 611 (IYQVPLPGVM…MEFVEGTEHD (70 aa)). 3 residues coordinate Mg(2+): Glu677, Glu689, and Asn691. Mn(2+)-binding residues include Glu677, Glu689, and Asn691.

Homotetramer. Mg(2+) serves as cofactor. Mn(2+) is required as a cofactor.

The enzyme catalyses beta-alanine + L-histidine + ATP = carnosine + ADP + phosphate + H(+). The catalysed reaction is 4-aminobutanoate + L-histidine + ATP = L-homocarnosine + ADP + phosphate + H(+). Functionally, catalyzes the synthesis of carnosine and homocarnosine. Carnosine is synthesized more efficiently than homocarnosine. The polypeptide is Carnosine synthase 1 (Mus musculus (Mouse)).